Here is a 250-residue protein sequence, read N- to C-terminus: MKTLRTLCVLMILSGVIFFGLKIDAKDIDIPFLNSLKKVVSDSDTDSAANSKKELKGSAKPLDVILYNQMDAPRLYNGCEVTSLAMVLNYAGYDVTKNTLANQVATVPLTYSSGLKGDPNDGFVGDMANGPGLGVYHRPIYQLAKTYAGDKVSDLTGKSISAVYQQLEKGNPVWVITTANFTPVDNMQTWKTPNGTIEITYSEHSVAVTGYDDKYVYLNDPYGYKNRKTDRTSFEKAWKQMGSQAVVIQK.

Positions 1–25 (MKTLRTLCVLMILSGVIFFGLKIDA) are cleaved as a signal peptide.

This is an uncharacterized protein from Bacillus subtilis (strain 168).